Here is a 434-residue protein sequence, read N- to C-terminus: Monodehydroascorbate reductase, seedling isozyme (434 aa).

FAD-binding positions include 13 to 16 (GGVA), Glu40, Arg47, Lys52, Ile95, and 146 to 147 (RE). NAD(+)-binding positions include 171–177 (GGYIGLE), Glu195, Arg201, and Gly260. 173-177 (YIGLE) provides a ligand contact to NADP(+). The NADP(+) site is built by Arg201 and Gly260. Asp297 lines the FAD pocket. Residue 313–314 (EH) coordinates NAD(+). NADP(+) is bound at residue 313–314 (EH). Residue Val315 coordinates FAD. Arg319 serves as a coordination point for L-ascorbate. Tyr348 is a binding site for FAD. Tyr348 contributes to the NAD(+) binding site. Tyr348 provides a ligand contact to NADP(+). Position 350 (Arg350) interacts with L-ascorbate.

This sequence belongs to the FAD-dependent oxidoreductase family. The cofactor is FAD.

It localises to the cytoplasm. The enzyme catalyses 2 monodehydro-L-ascorbate radical + NADH + H(+) = 2 L-ascorbate + NAD(+). Its function is as follows. Catalyzes the conversion of monodehydroascorbate to ascorbate, oxidizing NADH in the process. The chain is Monodehydroascorbate reductase, seedling isozyme from Cucumis sativus (Cucumber).